Here is a 211-residue protein sequence, read N- to C-terminus: NEDD4 family-interacting protein 1 (211 aa).

Residues 1-13 show a composition bias toward polar residues; it reads MSEQSSSRYQQLQ. Positions 1 to 48 are disordered; sequence MSEQSSSRYQQLQNEEEPGENPQASTDAPPPYSSIAGESSGLFDYKDE. Over 1 to 106 the chain is Cytoplasmic; sequence MSEQSSSRYQ…ADQLRIGNDG (106 aa). Short sequence motifs (PPxY motif) lie at residues 29-32 and 54-57; these read PPPY and PPSY. The chain crosses the membrane as a helical span at residues 107–127; sequence IFMLTFFMAFLFNWIGFFLSF. Topologically, residues 128 to 133 are extracellular; the sequence is CLTSSA. Residues 134–154 form a helical membrane-spanning segment; that stretch reads AGRYGAISGFGLSLIKWILIV. At 155 to 162 the chain is on the cytoplasmic side; it reads RFSTYFPG. Residues 163 to 183 traverse the membrane as a helical segment; the sequence is YFDGQYWLWWVFLVLGFLLFL. Topologically, residues 184–211 are extracellular; the sequence is RGFINYAKVRKMPDNFSTLPRTRVLFIY.

The protein localises to the golgi apparatus membrane. Functionally, may play a role in Golgi structure maintenance. In Xenopus tropicalis (Western clawed frog), this protein is NEDD4 family-interacting protein 1 (ndfip1).